A 153-amino-acid polypeptide reads, in one-letter code: MTDQVNRPKGVTSVALIAHDNKKADLIAWVEKNSVKLNKCTVYATGTTGKLIAEKTGVDVKRCHSGPLGGDQQIGALISEGKVDLLIFFWDPLEPMPHDPDIKALLRLATLWNVPSACNSATADFLVNSNLFEEFLPQRPDFDSYLSRDVPGN.

In terms of domain architecture, MGS-like spans 3-153; it reads DQVNRPKGVT…SYLSRDVPGN (151 aa). Substrate contacts are provided by residues His-19, Lys-23, 45–48, and 65–66; these read TGTT and SG. The active-site Proton donor/acceptor is the Asp-71. Residue His-98 coordinates substrate.

This sequence belongs to the methylglyoxal synthase family.

The enzyme catalyses dihydroxyacetone phosphate = methylglyoxal + phosphate. Its function is as follows. Catalyzes the formation of methylglyoxal from dihydroxyacetone phosphate. This is Methylglyoxal synthase from Hahella chejuensis (strain KCTC 2396).